The chain runs to 795 residues: Phenylalanine--tRNA ligase beta subunit (795 aa).

The tRNA-binding domain occupies 39–148 (AGSFHGVVVG…ADAPIGTDIR (110 aa)). The 76-residue stretch at 401–476 (PKRATITLRR…RVYGYNNIPD (76 aa)) folds into the B5 domain. Mg(2+)-binding residues include D454, D460, E463, and E464. Residues 701-794 (SRFPANRRDI…LKERFQASLR (94 aa)) enclose the FDX-ACB domain.

Belongs to the phenylalanyl-tRNA synthetase beta subunit family. Type 1 subfamily. Tetramer of two alpha and two beta subunits. Mg(2+) is required as a cofactor.

It is found in the cytoplasm. The catalysed reaction is tRNA(Phe) + L-phenylalanine + ATP = L-phenylalanyl-tRNA(Phe) + AMP + diphosphate + H(+). In Escherichia coli (strain K12), this protein is Phenylalanine--tRNA ligase beta subunit (pheT).